We begin with the raw amino-acid sequence, 148 residues long: UPF0260 protein Spro_2751 (148 aa).

The protein belongs to the UPF0260 family.

In Serratia proteamaculans (strain 568), this protein is UPF0260 protein Spro_2751.